A 195-amino-acid chain; its full sequence is A-type ATP synthase subunit E (195 aa).

The protein belongs to the V-ATPase E subunit family. In terms of assembly, has multiple subunits with at least A(3), B(3), C, D, E, F, H, I and proteolipid K(x).

The protein localises to the cell membrane. Functionally, component of the A-type ATP synthase that produces ATP from ADP in the presence of a proton gradient across the membrane. This is A-type ATP synthase subunit E from Staphylothermus marinus (strain ATCC 43588 / DSM 3639 / JCM 9404 / F1).